The sequence spans 83 residues: Beta/kappa-theraphotoxin-Cg2a (83 aa).

A signal peptide spans 1 to 21 (MKASVFAVILGLVVLCACSFA). Residues 22 to 53 (EDEQDQFVSPNELLKSMFVESRHEFTPEVEGR) constitute a propeptide that is removed on maturation. Intrachain disulfides connect cysteine 55–cysteine 69, cysteine 62–cysteine 74, and cysteine 68–cysteine 78. Residue isoleucine 82 is modified to Isoleucine amide.

The protein belongs to the neurotoxin 30 (phrixotoxin) family. As to expression, expressed by the venom gland.

The protein resides in the secreted. In terms of biological role, this gating-modifier toxin shows an important inhibitory activity on sodium channels. It is very active on Nav1.7/SCN9A (IC(50)~0.6 nM), and also shows activity on Nav1.3/SCN3A (IC(50)=292 nM), Nav1.4/SCN4A (IC(50)=2.2-159 nM), and Nav1.5/SCN5A (IC(50)=2.3-2.9 uM). It has also been shown to inhibit tetrodotoxin (TTX)-resistant (IC(50)=27.6 nM) and TTX-sensitive (IC(50)=30.2 nM) sodium channels in rat dorsal root ganglion neurons. Lower inhibitory activity has also been shown on potassium channels: Kv4.2/KCND2 (IC(50)=604.2 nM), Kv4.3/KCND3 (IC(50)=425.1 nM), and Kv2.1/KCNB1 (IC(50)=14.3 uM). It binds to phospholipid membranes. Like its analog AM-8145, it may act by interacting only with the second voltage-sensor domain of Nav1.7/SCN9A. This Chilobrachys guangxiensis (Chinese earth tiger tarantula) protein is Beta/kappa-theraphotoxin-Cg2a.